The following is a 461-amino-acid chain: Glycine--tRNA ligase (461 aa).

2 residues coordinate substrate: arginine 100 and glutamate 174. ATP is bound by residues 206–208, 216–221, 290–291, and 334–337; these read RNE, FRTREF, EL, and GVDR. 221 to 225 contributes to the substrate binding site; that stretch reads FEQME. A substrate-binding site is contributed by 330–334; sequence EPSVG.

It belongs to the class-II aminoacyl-tRNA synthetase family. In terms of assembly, homodimer.

The protein localises to the cytoplasm. It carries out the reaction tRNA(Gly) + glycine + ATP = glycyl-tRNA(Gly) + AMP + diphosphate. Functionally, catalyzes the attachment of glycine to tRNA(Gly). The protein is Glycine--tRNA ligase of Caldanaerobacter subterraneus subsp. tengcongensis (strain DSM 15242 / JCM 11007 / NBRC 100824 / MB4) (Thermoanaerobacter tengcongensis).